Reading from the N-terminus, the 227-residue chain is Casparian strip membrane protein 2 (227 aa).

Residues methionine 1–cysteine 59 lie on the Cytoplasmic side of the membrane. A disordered region spans residues glycine 17–glutamine 37. Residues alanine 23–threonine 33 are compositionally biased toward pro residues. A helical membrane pass occupies residues methionine 60–isoleucine 80. The Extracellular segment spans residues serine 81–alanine 107. Residues phenylalanine 108–phenylalanine 128 traverse the membrane as a helical segment. The Cytoplasmic segment spans residues serine 129–aspartate 149. The helical transmembrane segment at threonine 150 to alanine 170 threads the bilayer. The Extracellular segment spans residues histidine 171 to valine 197. A helical membrane pass occupies residues valine 198 to isoleucine 218. Residues arginine 219–histidine 227 are Cytoplasmic-facing.

It belongs to the Casparian strip membrane proteins (CASP) family. As to quaternary structure, homodimer and heterodimers.

It localises to the cell membrane. Regulates membrane-cell wall junctions and localized cell wall deposition. Required for establishment of the Casparian strip membrane domain (CSD) and the subsequent formation of Casparian strips, a cell wall modification of the root endodermis that determines an apoplastic barrier between the intraorganismal apoplasm and the extraorganismal apoplasm and prevents lateral diffusion. The chain is Casparian strip membrane protein 2 from Brachypodium distachyon (Purple false brome).